The following is a 416-amino-acid chain: Pre-mRNA-splicing factor slu-7 (416 aa).

The tract at residues Met1–Asn34 is disordered. The CCHC-type zinc-finger motif lies at Gly95–Glu112. Basic and acidic residues-rich tracts occupy residues Arg168–Asp179 and Asp188–Arg213. The segment at Arg168–Arg213 is disordered.

It belongs to the SLU7 family. In terms of assembly, associated with the spliceosome.

Its subcellular location is the nucleus. Its function is as follows. Involved in pre-mRNA splicing. The sequence is that of Pre-mRNA-splicing factor slu-7 (slu-7) from Neurospora crassa (strain ATCC 24698 / 74-OR23-1A / CBS 708.71 / DSM 1257 / FGSC 987).